Reading from the N-terminus, the 193-residue chain is tRNA(Phe) 7-((3-amino-3-carboxypropyl)-4-demethylwyosine(37)-N(4))-methyltransferase (193 aa).

This sequence belongs to the TYW3 family.

It carries out the reaction 4-demethyl-7-[(3S)-3-amino-3-carboxypropyl]wyosine(37) in tRNA(Phe) + S-adenosyl-L-methionine = 7-[(3S)-3-amino-3-carboxypropyl]wyosine(37) in tRNA(Phe) + S-adenosyl-L-homocysteine + H(+). Its function is as follows. S-adenosyl-L-methionine-dependent methyltransferase that acts as a component of the wyosine derivatives biosynthesis pathway. Probably methylates N-4 position of wybutosine-86 to produce wybutosine-72. This Methanocaldococcus jannaschii (strain ATCC 43067 / DSM 2661 / JAL-1 / JCM 10045 / NBRC 100440) (Methanococcus jannaschii) protein is tRNA(Phe) 7-((3-amino-3-carboxypropyl)-4-demethylwyosine(37)-N(4))-methyltransferase.